A 277-amino-acid polypeptide reads, in one-letter code: Phosphatidylglycerol--prolipoprotein diacylglyceryl transferase (277 aa).

The next 4 membrane-spanning stretches (helical) occupy residues 18–38 (ISVK…LLLA), 51–71 (IIVD…RIYY), 89–109 (IWHG…TAII), and 116–136 (ISFW…QAIG). Arg137 contacts a 1,2-diacyl-sn-glycero-3-phospho-(1'-sn-glycerol). Transmembrane regions (helical) follow at residues 177 to 197 (QPTF…LLII), 205 to 225 (GELF…IEGM), and 235 to 255 (FRVS…IIIY).

Belongs to the Lgt family.

The protein localises to the cell membrane. The catalysed reaction is L-cysteinyl-[prolipoprotein] + a 1,2-diacyl-sn-glycero-3-phospho-(1'-sn-glycerol) = an S-1,2-diacyl-sn-glyceryl-L-cysteinyl-[prolipoprotein] + sn-glycerol 1-phosphate + H(+). Its pathway is protein modification; lipoprotein biosynthesis (diacylglyceryl transfer). Catalyzes the transfer of the diacylglyceryl group from phosphatidylglycerol to the sulfhydryl group of the N-terminal cysteine of a prolipoprotein, the first step in the formation of mature lipoproteins. The protein is Phosphatidylglycerol--prolipoprotein diacylglyceryl transferase of Listeria monocytogenes serovar 1/2a (strain ATCC BAA-679 / EGD-e).